We begin with the raw amino-acid sequence, 330 residues long: MGDTSPRTSVSTDGDTDHNNLMFDEGHLGIGASDSSDRSKSKMDQKTLRRLAQNREAARKSRLRKKAYVQQLENSRLKLTQLEQELQRARQQGVFISSSGDQAHSTAGDGAMAFDVEYRRWQEDKNRQMKELSSAIDSHATDSELRIIVDGVIAHYEELYRIKGNAAKSDVFHLLSGMWKTPAERCFLWLGGFRSSELLKLIASQLEPLTEQQSLDINNLQQSSQQAEDALSQGMDNLQQSLADTLSSGTLGSSSSGNVASYMGQMAMAMGKLGTLEGFIRQADNLRLQTYQQMVRLLTTRQSARALLAVHNYTLRLRALSSLWLARPRE.

The span at 1–13 shows a compositional bias: polar residues; it reads MGDTSPRTSVSTD. Residues 1–64 are disordered; sequence MGDTSPRTSV…REAARKSRLR (64 aa). Positions 35 to 47 are enriched in basic and acidic residues; that stretch reads SSDRSKSKMDQKT. Residues 44-107 form the bZIP domain; sequence DQKTLRRLAQ…SSGDQAHSTA (64 aa). 2 coiled-coil regions span residues 45–98 and 211–244; these read QKTL…FISS and EQQS…SLAD. Residues 46-66 form a basic motif region; the sequence is KTLRRLAQNREAARKSRLRKK. The tract at residues 72-86 is leucine-zipper; that stretch reads LENSRLKLTQLEQEL. The DOG1 domain maps to 111–327; sequence AMAFDVEYRR…RALSSLWLAR (217 aa).

Belongs to the bZIP family. Binds DNA as a dimer. Interaction with the Dof domain protein OBP1 enhances the binding to the ocs element. Interacts with NPR1, NPR3 and NPR4. In terms of tissue distribution, predominantly expressed in roots.

The protein resides in the nucleus. In terms of biological role, transcriptional activator that binds specifically to the DNA sequence 5'-TGACG-3'. Recognizes ocs elements like the as-1 motif of the cauliflower mosaic virus 35S promoter. Binding to the as-1-like cis elements mediate auxin- and salicylic acid-inducible transcription. May be involved in the induction of the systemic acquired resistance (SAR) via its interaction with NPR1. Could also bind to the Hex-motif (5'-TGACGTGG-3') another cis-acting element found in plant histone promoters. This is Transcription factor TGA5 (TGA5) from Arabidopsis thaliana (Mouse-ear cress).